Consider the following 335-residue polypeptide: Heat-inducible transcription repressor HrcA (335 aa).

It belongs to the HrcA family.

In terms of biological role, negative regulator of class I heat shock genes (grpE-dnaK-dnaJ and groELS operons). Prevents heat-shock induction of these operons. The protein is Heat-inducible transcription repressor HrcA of Mesomycoplasma hyopneumoniae (strain 232) (Mycoplasma hyopneumoniae).